Here is a 126-residue protein sequence, read N- to C-terminus: Small ribosomal subunit protein uS13 (126 aa).

The tract at residues 99 to 126 (LRGQSTKNNARTRKGKRKTVANKKRVTK) is disordered. Residues 108–126 (ARTRKGKRKTVANKKRVTK) are compositionally biased toward basic residues.

Belongs to the universal ribosomal protein uS13 family. Part of the 30S ribosomal subunit. Forms a loose heterodimer with protein S19. Forms two bridges to the 50S subunit in the 70S ribosome.

Located at the top of the head of the 30S subunit, it contacts several helices of the 16S rRNA. In the 70S ribosome it contacts the 23S rRNA (bridge B1a) and protein L5 of the 50S subunit (bridge B1b), connecting the 2 subunits; these bridges are implicated in subunit movement. Contacts the tRNAs in the A and P-sites. The sequence is that of Small ribosomal subunit protein uS13 from Azobacteroides pseudotrichonymphae genomovar. CFP2.